Reading from the N-terminus, the 183-residue chain is Interleukin-24 (183 aa).

Positions 1-28 (MQTSLRQQILPGLSLILLVLNQVPELQG) are cleaved as a signal peptide. The cysteines at positions 36 and 83 are disulfide-linked. Asparagine 76 carries N-linked (GlcNAc...) asparagine glycosylation. Residue lysine 99 forms a Glycyl lysine isopeptide (Lys-Gly) (interchain with G-Cter in ubiquitin) linkage.

It belongs to the IL-10 family. Glycosylated. Post-translationally, ubiquitination at Lys-99 promotes proteasomal degradation.

It is found in the secreted. Multifunctional cytokine mainly produced by T-cells that plays a regulatory role in immune response, tissue homeostasis, host defense, and oncogenesis. Possesses antiviral functions and induces the type I interferon response during influenza infection. Signals through two receptor complexes IL20RA/IL20RB or IL20RB/IL22RA1. In turn, stimulates the JAK1-STAT3 and MAPK pathways and promotes the secretion of pro-inflammatory mediators including IL8 and MMP1. Intracellularly, maintains endoplasmic reticulum homeostasis by restricting the eIF2alpha-CHOP pathway-mediated stress signal. In addition, acts as a quality control mechanism for the ubiquitin proteasome system by alerting the cell to proteasome dysfunction through activation of PKR/EIF2AK2. The polypeptide is Interleukin-24 (Il24) (Rattus norvegicus (Rat)).